The primary structure comprises 189 residues: Prophage DNA-packing protein NohA (189 aa).

It belongs to the terminase small subunit family.

In Escherichia coli (strain K12), this protein is Prophage DNA-packing protein NohA (nohA).